The following is a 363-amino-acid chain: 3-isopropylmalate dehydrogenase (363 aa).

Position 78–91 (78–91 (GPKWEHLPPAEQPE)) interacts with NAD(+). Substrate is bound by residues Arg-99, Arg-109, Arg-138, and Asp-227. Mg(2+) is bound by residues Asp-227, Asp-251, and Asp-255. 285–297 (GSAPDIAGKDIAN) serves as a coordination point for NAD(+).

This sequence belongs to the isocitrate and isopropylmalate dehydrogenases family. LeuB type 1 subfamily. Homodimer. The cofactor is Mg(2+). Mn(2+) is required as a cofactor.

It is found in the cytoplasm. It carries out the reaction (2R,3S)-3-isopropylmalate + NAD(+) = 4-methyl-2-oxopentanoate + CO2 + NADH. Its pathway is amino-acid biosynthesis; L-leucine biosynthesis; L-leucine from 3-methyl-2-oxobutanoate: step 3/4. Its function is as follows. Catalyzes the oxidation of 3-carboxy-2-hydroxy-4-methylpentanoate (3-isopropylmalate) to 3-carboxy-4-methyl-2-oxopentanoate. The product decarboxylates to 4-methyl-2 oxopentanoate. The polypeptide is 3-isopropylmalate dehydrogenase (Pectobacterium atrosepticum (strain SCRI 1043 / ATCC BAA-672) (Erwinia carotovora subsp. atroseptica)).